The primary structure comprises 331 residues: FMRFamide-related neuropeptides (331 aa).

The N-terminal stretch at 1 to 25 (MRCWSPCSLLVVIVIYCLSSHTSEA) is a signal peptide. The propeptide occupies 26-65 (FDLAQACVESQRLSLLPICDTIFAVQQEGAQQSADDGMRS). Phenylalanine amide occurs at positions 71 and 83. The propeptide occupies 86 to 94 (NVPDLPFED). Phenylalanine amide is present on phenylalanine 100. Residues 103–168 (AAPQLDDLLK…YIDDVEDSDV (66 aa)) constitute a propeptide that is removed on maturation. The disordered stretch occupies residues 122–158 (QKADETSVRRKRSTDAAPQNNAENPEQKNDSAKITKR). Over residues 146-158 (PEQKNDSAKITKR) the composition is skewed to basic and acidic residues. Phenylalanine amide occurs at positions 174 and 181. A propeptide spanning residues 184–194 (NPSDAGNKLTE) is cleaved from the precursor. Position 200 is a phenylalanine amide (phenylalanine 200). Positions 203–205 (DPE) are excised as a propeptide. At phenylalanine 211 the chain carries Phenylalanine amide. Residues 214–216 (SDD) constitute a propeptide that is removed on maturation. Phenylalanine amide is present on phenylalanine 222. A propeptide spanning residues 225–236 (NPSDVEDELEED) is cleaved from the precursor. The residue at position 242 (phenylalanine 242) is a Phenylalanine amide. Positions 245–254 (GGEDDEEEAE) are excised as a propeptide. Residue phenylalanine 260 is modified to Phenylalanine amide. Residues 263–265 (DPE) constitute a propeptide that is removed on maturation. Residue phenylalanine 271 is modified to Phenylalanine amide. A propeptide spanning residues 274–277 (SGED) is cleaved from the precursor. Over residues 282–296 (RFGRNPDEQEADKRF) the composition is skewed to basic and acidic residues. The interval 282–310 (RFGRNPDEQEADKRFMRFGRGGEDDEVST) is disordered. Phenylalanine 283 is subject to Phenylalanine amide. Residues 286–293 (NPDEQEAD) constitute a propeptide that is removed on maturation. Phenylalanine amide is present on phenylalanine 299. Residues 302–312 (GGEDDEVSTED) constitute a propeptide that is removed on maturation. Phenylalanine 318 carries the phenylalanine amide modification. Residues 321–331 (SADKCKGCLEG) constitute a propeptide that is removed on maturation.

This sequence belongs to the FARP (FMRFamide related peptide) family.

Its subcellular location is the secreted. Functionally, excitatory neurotransmitters that directly modulate chromatophore function by activating chromatophore expansion at the chromatophore neuromuscular junction. The polypeptide is FMRFamide-related neuropeptides (Doryteuthis pealeii (Longfin inshore squid)).